Here is a 620-residue protein sequence, read N- to C-terminus: Chaperone protein HscA homolog (620 aa).

It belongs to the heat shock protein 70 family.

Chaperone involved in the maturation of iron-sulfur cluster-containing proteins. Has a low intrinsic ATPase activity which is markedly stimulated by HscB. The protein is Chaperone protein HscA homolog of Shewanella oneidensis (strain ATCC 700550 / JCM 31522 / CIP 106686 / LMG 19005 / NCIMB 14063 / MR-1).